The sequence spans 431 residues: Na(+)/H(+) antiporter NhaA 1 (431 aa).

The next 11 helical transmembrane spans lie at 17 to 37 (LSGI…NSNF), 56 to 76 (FIIS…LFFL), 98 to 118 (MFPF…YIAL), 123 to 143 (FIGF…MLIL), 154 to 174 (LFLV…VATV), 182 to 202 (EYFL…YFDV), 209 to 229 (LFLG…ATIA), 301 to 321 (FSAF…LLDF), 329 to 349 (MIVL…IFGF), 373 to 393 (VGFI…LAFI), and 400 to 420 (AIKI…MILI).

The protein belongs to the NhaA Na(+)/H(+) (TC 2.A.33) antiporter family.

The protein resides in the cell inner membrane. The catalysed reaction is Na(+)(in) + 2 H(+)(out) = Na(+)(out) + 2 H(+)(in). Its function is as follows. Na(+)/H(+) antiporter that extrudes sodium in exchange for external protons. This Aliarcobacter butzleri (strain RM4018) (Arcobacter butzleri) protein is Na(+)/H(+) antiporter NhaA 1.